Here is a 117-residue protein sequence, read N- to C-terminus: Conotoxin vil14.3 (117 aa).

The first 22 residues, 1–22 (MGFRVLVLVVMATTSALPFTFS), serve as a signal peptide directing secretion. Residues 23–90 (EEPGRSPFRP…FAELSVGQRR (68 aa)) constitute a propeptide that is removed on maturation. Residues 53-79 (RADGQPPDMRQPEMRRPEMRRPEVRQP) form a disordered region. Basic and acidic residues predominate over residues 62–79 (RQPEMRRPEMRRPEVRQP). 2 disulfide bridges follow: Cys96–Cys116 and Cys100–Cys112.

The protein belongs to the conotoxin R superfamily. As to expression, expressed by the venom duct.

The protein localises to the secreted. This is Conotoxin vil14.3 from Conus villepinii (Villepin's cone).